The chain runs to 476 residues: Probable cytosol aminopeptidase (476 aa).

Mn(2+) is bound by residues Lys242 and Asp247. Lys254 is an active-site residue. Mn(2+) contacts are provided by Asp265, Asp324, and Glu326. Arg328 is an active-site residue.

Belongs to the peptidase M17 family. Mn(2+) is required as a cofactor.

It localises to the cytoplasm. The catalysed reaction is Release of an N-terminal amino acid, Xaa-|-Yaa-, in which Xaa is preferably Leu, but may be other amino acids including Pro although not Arg or Lys, and Yaa may be Pro. Amino acid amides and methyl esters are also readily hydrolyzed, but rates on arylamides are exceedingly low.. It carries out the reaction Release of an N-terminal amino acid, preferentially leucine, but not glutamic or aspartic acids.. Its function is as follows. Presumably involved in the processing and regular turnover of intracellular proteins. Catalyzes the removal of unsubstituted N-terminal amino acids from various peptides. The chain is Probable cytosol aminopeptidase from Treponema denticola (strain ATCC 35405 / DSM 14222 / CIP 103919 / JCM 8153 / KCTC 15104).